Here is a 244-residue protein sequence, read N- to C-terminus: Tubulin-folding cofactor B (244 aa).

M1 carries the post-translational modification N-acetylmethionine. S65 is modified (phosphoserine; by PAK1). Position 98 is a phosphotyrosine (Y98). At S110 the chain carries Phosphoserine. A Phosphoserine; by PAK1 modification is found at S128. The CAP-Gly domain maps to 183–225 (GLTDFKPGYWVGVRYDEPLGKNDGSVNGKRYFECQAKYGAFVK). K219 is subject to N6-acetyllysine.

It belongs to the TBCB family. In terms of assembly, supercomplex made of cofactors A to E. Cofactors A and D function by capturing and stabilizing tubulin in a quasi-native conformation. Cofactor E binds to the cofactor D-tubulin complex; interaction with cofactor C then causes the release of tubulin polypeptides that are committed to the native state. Cofactors B and E can form a heterodimer which binds to alpha-tubulin and enhances their ability to dissociate tubulin heterodimers. Interacts with GAN. Interacts with DCTN1. Post-translationally, phosphorylation by PAK1 is required for normal function. Ubiquitinated in the presence of GAN which targets it for degradation by the proteasome. In terms of tissue distribution, widely expressed with highest levels in brain. Broadly distributed throughout the neonate brain but restricted mainly to ependymary cells in the adult brain where it is concentrated in the cilia.

It localises to the cytoplasm. The protein resides in the cytoskeleton. Binds to alpha-tubulin folding intermediates after their interaction with cytosolic chaperonin in the pathway leading from newly synthesized tubulin to properly folded heterodimer. Involved in regulation of tubulin heterodimer dissociation. May function as a negative regulator of axonal growth. This chain is Tubulin-folding cofactor B (Tbcb), found in Mus musculus (Mouse).